Reading from the N-terminus, the 118-residue chain is Large ribosomal subunit protein bL20 (118 aa).

Belongs to the bacterial ribosomal protein bL20 family.

Functionally, binds directly to 23S ribosomal RNA and is necessary for the in vitro assembly process of the 50S ribosomal subunit. It is not involved in the protein synthesizing functions of that subunit. This chain is Large ribosomal subunit protein bL20, found in Staphylococcus aureus (strain Mu3 / ATCC 700698).